A 465-amino-acid polypeptide reads, in one-letter code: Probable spore coat protein DDB_G0283555 (465 aa).

The first 22 residues, 1–22 (MRINNLLVCLVLVFSTLSISNA), serve as a signal peptide directing secretion. In terms of domain architecture, DSCP-N spans 35 to 153 (RNCDSLSEDQ…RYPVCKGGGG (119 aa)). Follistatin-like domains lie at 160-182 (PCKN…AYCV), 195-217 (LCKA…ACCV), 229-251 (LCDA…ANCV), 257-280 (ECEH…PHCQ), 287-309 (LCRN…PTCI), 318-340 (PCRD…PSCV), and 435-458 (LCEF…PVCL).

Functionally, may contribute to the structure of the coat at the interface between the middle, cellulosic layer and the outer, electron-dense, proteinaceous layer. This chain is Probable spore coat protein DDB_G0283555, found in Dictyostelium discoideum (Social amoeba).